A 243-amino-acid polypeptide reads, in one-letter code: Probable flavin-dependent thymidylate synthase (243 aa).

Residues 21-239 enclose the ThyX domain; that stretch reads FEVDDFEESK…PNTYQDIPDV (219 aa). FAD is bound by residues S80 and 103 to 105; that span reads RHR. DUMP is bound by residues 100–103, 113–115, and R178; these read ELER and SQR. A ThyX motif motif is present at residues 103-113; sequence RHRHLSFSVVS. 194-196 is an FAD binding site; that stretch reads NHR. R205 lines the dUMP pocket. The active-site Involved in ionization of N3 of dUMP, leading to its activation is R205.

Belongs to the thymidylate synthase ThyX family. In terms of assembly, homotetramer. It depends on FAD as a cofactor.

It carries out the reaction dUMP + (6R)-5,10-methylene-5,6,7,8-tetrahydrofolate + NADPH + H(+) = dTMP + (6S)-5,6,7,8-tetrahydrofolate + NADP(+). Its pathway is pyrimidine metabolism; dTTP biosynthesis. Catalyzes the reductive methylation of 2'-deoxyuridine-5'-monophosphate (dUMP) to 2'-deoxythymidine-5'-monophosphate (dTMP) while utilizing 5,10-methylenetetrahydrofolate (mTHF) as the methyl donor, and NADPH and FADH(2) as the reductant. The polypeptide is Probable flavin-dependent thymidylate synthase (48) (Mycobacterium phage L5 (Mycobacteriophage L5)).